Reading from the N-terminus, the 379-residue chain is S-adenosylmethionine decarboxylase proenzyme (379 aa).

Residues Glu30 and Glu33 contribute to the active site. The active-site Schiff-base intermediate with substrate; via pyruvic acid is the Ser96. Ser96 is subject to Pyruvic acid (Ser); by autocatalysis. Cys110 acts as the Proton donor; for catalytic activity in catalysis. Catalysis depends on proton acceptor; for processing activity residues Ser254 and His267.

It belongs to the eukaryotic AdoMetDC family. In terms of assembly, heterotetramer of two alpha and two beta chains. Pyruvate is required as a cofactor. Is synthesized initially as an inactive proenzyme. Formation of the active enzyme involves a self-maturation process in which the active site pyruvoyl group is generated from an internal serine residue via an autocatalytic post-translational modification. Two non-identical subunits are generated from the proenzyme in this reaction, and the pyruvate is formed at the N-terminus of the alpha chain, which is derived from the carboxyl end of the proenzyme. The post-translation cleavage follows an unusual pathway, termed non-hydrolytic serinolysis, in which the side chain hydroxyl group of the serine supplies its oxygen atom to form the C-terminus of the beta chain, while the remainder of the serine residue undergoes an oxidative deamination to produce ammonia and the pyruvoyl group blocking the N-terminus of the alpha chain.

It catalyses the reaction S-adenosyl-L-methionine + H(+) = S-adenosyl 3-(methylsulfanyl)propylamine + CO2. Its pathway is amine and polyamine biosynthesis; S-adenosylmethioninamine biosynthesis; S-adenosylmethioninamine from S-adenosyl-L-methionine: step 1/1. Functionally, S-adenosylmethionine decarboxylase is essential for the biosynthesis of spermine and spermidine. The alpha subunit contains the active site. The sequence is that of S-adenosylmethionine decarboxylase proenzyme (amd1) from Dictyostelium discoideum (Social amoeba).